Consider the following 596-residue polypeptide: Tripeptidyl-peptidase SED2 (596 aa).

A signal peptide spans 1–16 (MLVLKFVCLLASVAAA). Positions 18–203 (PTSWSSHKVV…LEAMSEEEFS (186 aa)) are cleaved as a propeptide — removed in mature form. Residues 210-596 (LVTTACLREL…NFQALTKVLP (387 aa)) enclose the Peptidase S53 domain. Asparagine 265 carries N-linked (GlcNAc...) asparagine glycosylation. Active-site charge relay system residues include glutamate 286 and aspartate 290. Residue asparagine 403 is glycosylated (N-linked (GlcNAc...) asparagine). Serine 501 serves as the catalytic Charge relay system. The Ca(2+) site is built by aspartate 543 and isoleucine 544. N-linked (GlcNAc...) asparagine glycosylation occurs at asparagine 572. Ca(2+)-binding residues include glycine 576 and aspartate 578.

Ca(2+) serves as cofactor.

It is found in the secreted. The protein localises to the extracellular space. The catalysed reaction is Release of an N-terminal tripeptide from a polypeptide.. Functionally, secreted tripeptidyl-peptidase which degrades proteins at acidic pHs and is involved in virulence. In Arthroderma otae (strain ATCC MYA-4605 / CBS 113480) (Microsporum canis), this protein is Tripeptidyl-peptidase SED2 (SED2).